The following is a 345-amino-acid chain: 4-hydroxy-2-oxovalerate aldolase 1 (345 aa).

The 253-residue stretch at 9 to 261 (IRVTDTSLRD…RTGIDFFAIA (253 aa)) folds into the Pyruvate carboxyltransferase domain. Residue 17–18 (RD) coordinates substrate. Asp18 is a binding site for Mn(2+). His21 (proton acceptor) is an active-site residue. The substrate site is built by Ser171 and His200. Mn(2+) contacts are provided by His200 and His202. Substrate is bound at residue Tyr291.

Belongs to the 4-hydroxy-2-oxovalerate aldolase family.

The enzyme catalyses (S)-4-hydroxy-2-oxopentanoate = acetaldehyde + pyruvate. This chain is 4-hydroxy-2-oxovalerate aldolase 1, found in Nocardia farcinica (strain IFM 10152).